The following is a 484-amino-acid chain: Glutamyl-tRNA(Gln) amidotransferase subunit A (484 aa).

Active-site charge relay system residues include Lys76 and Ser151. The active-site Acyl-ester intermediate is Ser175.

It belongs to the amidase family. GatA subfamily. In terms of assembly, heterotrimer of A, B and C subunits.

It carries out the reaction L-glutamyl-tRNA(Gln) + L-glutamine + ATP + H2O = L-glutaminyl-tRNA(Gln) + L-glutamate + ADP + phosphate + H(+). Functionally, allows the formation of correctly charged Gln-tRNA(Gln) through the transamidation of misacylated Glu-tRNA(Gln) in organisms which lack glutaminyl-tRNA synthetase. The reaction takes place in the presence of glutamine and ATP through an activated gamma-phospho-Glu-tRNA(Gln). The chain is Glutamyl-tRNA(Gln) amidotransferase subunit A from Alkalilimnicola ehrlichii (strain ATCC BAA-1101 / DSM 17681 / MLHE-1).